Here is a 395-residue protein sequence, read N- to C-terminus: MGKLENASWIHDPLMKYLNSTEEYLAHLCGPKRSDLSLPVSVAYALIFLVGVMGNLLVCMVIVRHQTLKTPTNYYLFSLAVSDLLVLLLGMPLEIYEMWHNYPFLFGPVGCYFKTALFETVCFASILSVTTVSVERYVAIVHPFRAKLESTRRRALRILSLVWSFSVVFSLPNTSIHGIKFQHFPNGSSVPGSATCTVTKPMWVYNLIIQATSFLFYILPMTLISVLYYLMGLRLKRDESLEANKVAVNIHRPSRKSVTKMLFVLVLVFAICWTPFHVDRLFFSFVEEWTESLAAVFNLIHVVSGVFFYLSSAVNPIIYNLLSRRFRAAFRNVVSPTCKWCHPRHRPQGPPAQKIIFLTECHLVELTEDAGPQFPGQSSIHNTNLTTAPCAGEVP.

Topologically, residues 1–41 are extracellular; it reads MGKLENASWIHDPLMKYLNSTEEYLAHLCGPKRSDLSLPVS. N-linked (GlcNAc...) asparagine glycosylation is found at Asn-6 and Asn-19. The helical transmembrane segment at 42-62 threads the bilayer; it reads VAYALIFLVGVMGNLLVCMVI. Residues 63–74 are Cytoplasmic-facing; it reads VRHQTLKTPTNY. Residues 75-95 traverse the membrane as a helical segment; sequence YLFSLAVSDLLVLLLGMPLEI. Residues 96 to 115 lie on the Extracellular side of the membrane; that stretch reads YEMWHNYPFLFGPVGCYFKT. Cys-111 and Cys-196 are joined by a disulfide. A helical transmembrane segment spans residues 116–138; that stretch reads ALFETVCFASILSVTTVSVERYV. The Cytoplasmic portion of the chain corresponds to 139-157; that stretch reads AIVHPFRAKLESTRRRALR. The helical transmembrane segment at 158–178 threads the bilayer; the sequence is ILSLVWSFSVVFSLPNTSIHG. At 179-212 the chain is on the extracellular side; it reads IKFQHFPNGSSVPGSATCTVTKPMWVYNLIIQAT. An N-linked (GlcNAc...) asparagine glycan is attached at Asn-186. A helical transmembrane segment spans residues 213-233; that stretch reads SFLFYILPMTLISVLYYLMGL. Residues 234-257 lie on the Cytoplasmic side of the membrane; the sequence is RLKRDESLEANKVAVNIHRPSRKS. The chain crosses the membrane as a helical span at residues 258–278; that stretch reads VTKMLFVLVLVFAICWTPFHV. The Extracellular portion of the chain corresponds to 279-293; sequence DRLFFSFVEEWTESL. Residues 294–314 form a helical membrane-spanning segment; the sequence is AAVFNLIHVVSGVFFYLSSAV. Topologically, residues 315–395 are cytoplasmic; sequence NPIIYNLLSR…TTAPCAGEVP (81 aa). A disordered region spans residues 374–395; the sequence is FPGQSSIHNTNLTTAPCAGEVP. Residues 375–387 are compositionally biased toward polar residues; that stretch reads PGQSSIHNTNLTT.

This sequence belongs to the G-protein coupled receptor 1 family. The highest level is detected in the uterus. In the central nervous system, high expression levels were found in the hypothalamus and moderate levels in both the medulla oblongata and spinal cord. Expressed in the hypothalamic paraventricular nucleus (PVN) and suprachiasmatic nuclei (SCN) of the hypothalamus. Expression is low in the gastrointestinal tract. In other peripheral tissues, moderate expression was observed in the lung and ovary.

It localises to the cell membrane. Its function is as follows. Receptor for the neuromedin-U and neuromedin-S neuropeptides. The chain is Neuromedin-U receptor 2 (Nmur2) from Rattus norvegicus (Rat).